The sequence spans 226 residues: ATP synthase F(0) complex subunit a (226 aa).

6 helical membrane-spanning segments follow: residues 12–32 (PTMMGLPIVILIVLFPSILFP), 68–88 (WALMLISLILFIGSTNLLGLL), 97–117 (QLSMNLGMAIPLWAGTVITGF), 138–158 (IPMLVIIETISLFIQPMALAV), 164–184 (ITAGHLLIHLIGGATLALMDI), and 189–209 (AFITFTILILLTILEFAVALI).

Belongs to the ATPase A chain family. As to quaternary structure, component of the ATP synthase complex composed at least of ATP5F1A/subunit alpha, ATP5F1B/subunit beta, ATP5MC1/subunit c (homooctomer), MT-ATP6/subunit a, MT-ATP8/subunit 8, ATP5ME/subunit e, ATP5MF/subunit f, ATP5MG/subunit g, ATP5MK/subunit k, ATP5MJ/subunit j, ATP5F1C/subunit gamma, ATP5F1D/subunit delta, ATP5F1E/subunit epsilon, ATP5PF/subunit F6, ATP5PB/subunit b, ATP5PD/subunit d, ATP5PO/subunit OSCP. ATP synthase complex consists of a soluble F(1) head domain (subunits alpha(3) and beta(3)) - the catalytic core - and a membrane F(0) domain - the membrane proton channel (subunits c, a, 8, e, f, g, k and j). These two domains are linked by a central stalk (subunits gamma, delta, and epsilon) rotating inside the F1 region and a stationary peripheral stalk (subunits F6, b, d, and OSCP). Interacts with DNAJC30; interaction is direct.

The protein localises to the mitochondrion inner membrane. The enzyme catalyses H(+)(in) = H(+)(out). Functionally, subunit a, of the mitochondrial membrane ATP synthase complex (F(1)F(0) ATP synthase or Complex V) that produces ATP from ADP in the presence of a proton gradient across the membrane which is generated by electron transport complexes of the respiratory chain. ATP synthase complex consist of a soluble F(1) head domain - the catalytic core - and a membrane F(1) domain - the membrane proton channel. These two domains are linked by a central stalk rotating inside the F(1) region and a stationary peripheral stalk. During catalysis, ATP synthesis in the catalytic domain of F(1) is coupled via a rotary mechanism of the central stalk subunits to proton translocation. With the subunit c (ATP5MC1), forms the proton-conducting channel in the F(0) domain, that contains two crucial half-channels (inlet and outlet) that facilitate proton movement from the mitochondrial intermembrane space (IMS) into the matrix. Protons are taken up via the inlet half-channel and released through the outlet half-channel, following a Grotthuss mechanism. The sequence is that of ATP synthase F(0) complex subunit a from Phoca vitulina (Harbor seal).